The chain runs to 539 residues: 4-hydroxybenzoate--CoA/benzoate--CoA ligase (539 aa).

The protein belongs to the ATP-dependent AMP-binding enzyme family. Benzoate-CoA ligase subfamily. As to quaternary structure, homodimer. The N-terminus is blocked.

It carries out the reaction 4-hydroxybenzoate + ATP + CoA = 4-hydroxybenzoyl-CoA + AMP + diphosphate. The catalysed reaction is benzoate + ATP + CoA = benzoyl-CoA + AMP + diphosphate. In terms of biological role, catalyzes the ligation of 4-hydroxybenzoate, benzoate or cyclohex-1,4-dienecarboxylate and CoA at the expense of ATP. The enzyme shows low activity towards cyclo-2,5-dienecarboxylate, 4-fluorobenzoate, 4-chlorobenzoate and 2-methoxybenzoate. The polypeptide is 4-hydroxybenzoate--CoA/benzoate--CoA ligase (hbaA) (Rhodopseudomonas palustris (strain ATCC BAA-98 / CGA009)).